We begin with the raw amino-acid sequence, 268 residues long: Phosphatidylglycerol--prolipoprotein diacylglyceryl transferase (268 aa).

A run of 7 helical transmembrane segments spans residues 27 to 47 (PALR…MWLL), 66 to 86 (LLFY…VLFY), 104 to 124 (GGMS…YIAW), 130 to 150 (FFAV…AGRI), 181 to 201 (PSQL…LYWF), 208 to 228 (VGAV…IVET), and 242 to 262 (FMTM…YLIL). Arg149 contributes to the a 1,2-diacyl-sn-glycero-3-phospho-(1'-sn-glycerol) binding site.

The protein belongs to the Lgt family.

It localises to the cell inner membrane. The enzyme catalyses L-cysteinyl-[prolipoprotein] + a 1,2-diacyl-sn-glycero-3-phospho-(1'-sn-glycerol) = an S-1,2-diacyl-sn-glyceryl-L-cysteinyl-[prolipoprotein] + sn-glycerol 1-phosphate + H(+). It participates in protein modification; lipoprotein biosynthesis (diacylglyceryl transfer). Catalyzes the transfer of the diacylglyceryl group from phosphatidylglycerol to the sulfhydryl group of the N-terminal cysteine of a prolipoprotein, the first step in the formation of mature lipoproteins. The sequence is that of Phosphatidylglycerol--prolipoprotein diacylglyceryl transferase from Shewanella sp. (strain ANA-3).